The chain runs to 1615 residues: MSSAVGPRGPRPPTVPPPMQELPDLSHLTEEERNIIMAVMDRQKEEEEKEEAMLKCVVRDMAKPAACKTPRNAESQPHQPPLNIFRCVCVPRKPSSEEGGPERDWRLHQQFESYKEQVRKIGEEARRYQGEHKDDAPTCGICHKTKFADGCGHLCSYCRTKFCARCGGRVSLRSNNEDKVVMWVCNLCRKQQEILTKSGAWFFGSGPQQPSQDGTLSDTATGAGSEVPREKKARLQERSRSQTPLSTAAVSSQDTATPGAPLHRNKGAEPSQQALGPEQKQASRSRSEPPRERKKAPGLSEQNGKGGQKSERKRVPKSVVQPGEGIADERERKERRETRRLEKGRSQDYSDRPEKRDNGRVAEDQKQRKEEEYQTRYRSDPNLARYPVKAPPEEQQMRMHARVSRARHERRHSDVALPHTEAAAAAPAEATAGKRAPATARVSPPESPRARAAAAQPPTEHGPPPPRPAPGPAEPPEPRVPEPLRKQGRLDPGSAVLLRKAKREKAESMLRNDSLSSDQSESVRPSPPKPHRPKRGGKRRQMSVSSSEEEGVSTPEYTSCEDVELESESVSEKGDLDYYWLDPATWHSRETSPISSHPVTWQPSKEGDRLIGRVILNKRTTMPKESGALLGLKVVGGKMTDLGRLGAFITKVKKGSLADVVGHLRAGDEVLEWNGKPLPGATNEEVYNIILESKSEPQVEIIVSRPIGDIPRIPESSHPPLESSSSSFESQKMERPSISVISPTSPGALKDAPQVLPGQLSVKLWYDKVGHQLIVNVLQATDLPPRVDGRPRNPYVKMYFLPDRSDKSKRRTKTVKKLLEPKWNQTFVYSHVHRRDFRERMLEITVWDQPRVQDEESEFLGEILIELETALLDDEPHWYKLQTHDESSLPLPQPSPFMPRRHIHGESSSKKLQRSQRISDSDISDYEVDDGIGVVPPVGYRASARESKATTLTVPEQQRTTHHRSRSVSPHRGDDQGRPRSRLPNVPLQRSLDEIHPTRRSRSPTRHHDASRSPADHRSRHVESQYSSEPDSELLMLPRAKRGRSAESLHMTSELQPSLDRARSASTNCLRPDTSLHSPERERHSRKSERCSIQKQSRKGTASDADRVLPPCLSRRGYATPRATDQPVVRGKYPTRSRSSEHSSVRTLCSMHHLAPGGSAPPSPLLLTRTHRQGSPTQSPPADTSFGSRRGRQLPQVPVRSGSIEQASLVVEERTRQMKVKVHRFKQTTGSGSSQELDHEQYSKYNIHKDQYRSCDNASAKSSDSDVSDVSAISRASSTSRLSSTSFMSEQSERPRGRISSFTPKMQGRRMGTSGRAIIKSTSVSGEIYTLERNDGSQSDTAVGTVGAGGKKRRSSLSAKVVAIVSRRSRSTSQLSQTESGHKKLKSTIQRSTETGMAAEMRKMVRQPSRESTDGSINSYSSEGNLIFPGVRVGPDSQFSDFLDGLGPAQLVGRQTLATPAMGDIQIGMEDKKGQLEVEVIRARSLTQKPGSKSTPAPYVKVYLLENGACIAKKKTRIARKTLDPLYQQSLVFDESPQGKVLQVIVWGDYGRMDHKCFMGVAQILLEELDLSSMVIGWYKLFPPSSLVDPTLAPLTRRASQSSLESSSGPPCIRS.

The segment at 1 to 26 is disordered; that stretch reads MSSAVGPRGPRPPTVPPPMQELPDLS. Residues 9–20 show a composition bias toward pro residues; sequence GPRPPTVPPPMQ. Residues 22–205 form the RabBD domain; sequence LPDLSHLTEE…TKSGAWFFGS (184 aa). The FYVE-type zinc finger occupies 133–193; it reads KDDAPTCGIC…VCNLCRKQQE (61 aa). Residues C139, C142, C155, C158, C163, C166, C185, and C188 each contribute to the Zn(2+) site. The interval 205 to 569 is disordered; the sequence is SGPQQPSQDG…CEDVELESES (365 aa). Residues 206–222 show a composition bias toward polar residues; sequence GPQQPSQDGTLSDTATG. Basic and acidic residues predominate over residues 227-240; that stretch reads VPREKKARLQERSR. Over residues 241 to 256 the composition is skewed to polar residues; the sequence is SQTPLSTAAVSSQDTA. Basic and acidic residues predominate over residues 327–379; that stretch reads ADERERKERRETRRLEKGRSQDYSDRPEKRDNGRVAEDQKQRKEEEYQTRYRS. Basic residues predominate over residues 399–410; it reads MHARVSRARHER. Positions 421–459 are enriched in low complexity; it reads EAAAAAPAEATAGKRAPATARVSPPESPRARAAAAQPPT. Positions 460 to 475 are enriched in pro residues; that stretch reads EHGPPPPRPAPGPAEP. The span at 476–489 shows a compositional bias: basic and acidic residues; the sequence is PEPRVPEPLRKQGR. The segment covering 511-523 has biased composition (polar residues); the sequence is RNDSLSSDQSESV. S514 bears the Phosphoserine mark. Residues 529-541 are compositionally biased toward basic residues; that stretch reads KPHRPKRGGKRRQ. Over residues 559–569 the composition is skewed to acidic residues; that stretch reads SCEDVELESES. S592 carries the post-translational modification Phosphoserine. Residues 619–705 form the PDZ domain; sequence RTTMPKESGA…EPQVEIIVSR (87 aa). The tract at residues 712–746 is disordered; sequence RIPESSHPPLESSSSSFESQKMERPSISVISPTSP. Residues 714 to 730 show a composition bias toward low complexity; the sequence is PESSHPPLESSSSSFES. 2 positions are modified to phosphoserine: S742 and S745. Residues 756–879 enclose the C2 1 domain; the sequence is LPGQLSVKLW…ALLDDEPHWY (124 aa). The interval 884–1201 is disordered; that stretch reads HDESSLPLPQ…RQLPQVPVRS (318 aa). A Phosphoserine modification is found at S895. Residues 949 to 958 show a composition bias toward polar residues; the sequence is ATTLTVPEQQ. A Phosphoserine modification is found at S991. Positions 1006–1023 are enriched in basic and acidic residues; sequence RHHDASRSPADHRSRHVE. S1045 carries the phosphoserine modification. The segment covering 1078 to 1092 has biased composition (basic and acidic residues); it reads SPERERHSRKSERCS. Polar residues predominate over residues 1173 to 1187; that stretch reads QGSPTQSPPADTSFG. S1175 is modified (phosphoserine). T1177 carries the post-translational modification Phosphothreonine. Residues S1179, S1231, S1233, S1234, S1262, S1263, and S1265 each carry the phosphoserine modification. Residues 1256–1313 are disordered; sequence DNASAKSSDSDVSDVSAISRASSTSRLSSTSFMSEQSERPRGRISSFTPKMQGRRMGT. The segment covering 1268–1289 has biased composition (low complexity); sequence SDVSAISRASSTSRLSSTSFMS. The residue at position 1339 (S1339) is a Phosphoserine. Residues 1368-1397 form a disordered region; it reads RSRSTSQLSQTESGHKKLKSTIQRSTETGM. One can recognise a C2 2 domain in the interval 1461-1579; it reads AMGDIQIGME…DLSSMVIGWY (119 aa). Phosphoserine is present on residues S1600, S1603, S1606, and S1615.

As to quaternary structure, interacts with RAB3C, RAB10, RAB26 and RAB37. Binds SNAP25, SYT1 and CACNA1B. Interaction with SYT1 is enhanced by calcium ions. Interaction with SNAP25 is weaker in the presence of calcium ions. Binds RAB3A, RAB3B and RAB3D that have been activated by GTP-binding. Binds UNC13A. Interacts with TSPOAP1 and RIMBP2. Interacts with PPFIA3 and PPFIA4. Interacts with ERC1. Post-translationally, phosphorylated by BRSK1. As to expression, highly expressed in hippocampus, brain cortex, cerebellum and olfactory bulb. Detected at lower levels in midbrain, hindbrain and spinal cord. Detected retina and in spinal cord motor neurons.

It localises to the cell membrane. The protein resides in the synapse. Its subcellular location is the presynaptic cell membrane. Its function is as follows. Rab effector involved in exocytosis. May act as scaffold protein that regulates neurotransmitter release at the active zone. Essential for maintaining normal probability of neurotransmitter release and for regulating release during short-term synaptic plasticity. Plays a role in dendrite formation by melanocytes. The chain is Regulating synaptic membrane exocytosis protein 1 (Rims1) from Rattus norvegicus (Rat).